The sequence spans 615 residues: Vitamin B12 transporter BtuB (615 aa).

The signal sequence occupies residues 1-20 (MIKKISLLTALSVTAFSGWA). The TonB box motif lies at 26-33 (NAMVVTAN). The 115-residue stretch at 38-152 (PVNSVLAPTT…IGGVVNIITT (115 aa)) folds into the TBDR plug domain. Cyanocob(III)alamin contacts are provided by residues Ser85, Asn92, and 110–111 (IS). The TBDR beta-barrel domain maps to 155 to 615 (KNGTTLNAGV…EYYLTGSYTF (461 aa)). A run of 3 beta stranded transmembrane segments spans residues 158-165 (TTLNAGVG), 169-178 (YQSYDAATQQ), and 184-195 (TTATLAGNYVYT). Residues Asp199, Gln210, Asp212, and Asp214 each coordinate Ca(2+). 2 beta stranded membrane-spanning segments follow: residues 216–226 (FMSKSLYGTVE) and 231–247 (DQFS…NRTD). The Ca(2+) site is built by Tyr248, Asp249, and Asp255. 14 beta stranded membrane passes run 257 to 271 (RQLY…LRYQ), 273 to 290 (GIYS…KDYD), 303 to 319 (TLVD…NVLQ), 322 to 331 (AGTVSAGVDW), 347 to 363 (ESQN…QRFA), 365 to 375 (IVLEGSVRGDD), 379 to 394 (FGWH…WEFI), 397 to 411 (YSLI…KAPN), 429 to 438 (ESKQWESGVE), 444 to 453 (VIWRVSGYRN), 468 to 486 (VYEN…TASF), 490 to 505 (PVGH…SRNA), 513 to 525 (RRAK…QLDW), and 531 to 546 (DWSV…YDKD). Thr303 provides a ligand contact to cyanocob(III)alamin. Residue Arg513 participates in cyanocob(III)alamin binding. Residue Tyr547 participates in cyanocob(III)alamin binding. A run of 3 beta stranded transmembrane segments spans residues 559–573 (TVKL…LAAS), 586–597 (IANLFDKDYETA), and 603–615 (AGRE…SYTF). Positions 598 to 615 (YGYRTAGREYYLTGSYTF) match the TonB C-terminal box motif.

Belongs to the TonB-dependent receptor family. BtuB (TC 1.B.14.3.1) subfamily.

The protein localises to the cell outer membrane. Functionally, involved in the active translocation of vitamin B12 (cyanocobalamin) across the outer membrane to the periplasmic space. It derives its energy for transport by interacting with the trans-periplasmic membrane protein TonB. The polypeptide is Vitamin B12 transporter BtuB (Pectobacterium atrosepticum (strain SCRI 1043 / ATCC BAA-672) (Erwinia carotovora subsp. atroseptica)).